A 119-amino-acid chain; its full sequence is Holo-[acyl-carrier-protein] synthase (119 aa).

2 residues coordinate Mg(2+): aspartate 2 and glutamate 51.

The protein belongs to the P-Pant transferase superfamily. AcpS family. It depends on Mg(2+) as a cofactor.

The protein localises to the cytoplasm. The catalysed reaction is apo-[ACP] + CoA = holo-[ACP] + adenosine 3',5'-bisphosphate + H(+). Transfers the 4'-phosphopantetheine moiety from coenzyme A to a Ser of acyl-carrier-protein. The chain is Holo-[acyl-carrier-protein] synthase from Chlorobium luteolum (strain DSM 273 / BCRC 81028 / 2530) (Pelodictyon luteolum).